The sequence spans 110 residues: Nucleoid-associated protein KPN78578_04440 (110 aa).

This sequence belongs to the YbaB/EbfC family. Homodimer.

The protein localises to the cytoplasm. Its subcellular location is the nucleoid. In terms of biological role, binds to DNA and alters its conformation. May be involved in regulation of gene expression, nucleoid organization and DNA protection. The sequence is that of Nucleoid-associated protein KPN78578_04440 from Klebsiella pneumoniae subsp. pneumoniae (strain ATCC 700721 / MGH 78578).